Consider the following 366-residue polypeptide: Beta sliding clamp (366 aa).

The segment at 1-125 is i; it reads MKFTVEREHL…FPNLDDWQSE (125 aa). The II stretch occupies residues 126–253; sequence VEFTLPQATM…YRRVLPKNPD (128 aa). Residues 254–366 form an III region; the sequence is KHLEAGCDLL…AAYVVMPMRL (113 aa).

Belongs to the beta sliding clamp family. Forms a ring-shaped head-to-tail homodimer around DNA which binds and tethers DNA polymerases and other proteins to the DNA. The DNA replisome complex has a single clamp-loading complex (3 tau and 1 each of delta, delta', psi and chi subunits) which binds 3 Pol III cores (1 core on the leading strand and 2 on the lagging strand) each with a beta sliding clamp dimer. Additional proteins in the replisome are other copies of gamma, psi and chi, Ssb, DNA helicase and RNA primase.

It localises to the cytoplasm. In terms of biological role, confers DNA tethering and processivity to DNA polymerases and other proteins. Acts as a clamp, forming a ring around DNA (a reaction catalyzed by the clamp-loading complex) which diffuses in an ATP-independent manner freely and bidirectionally along dsDNA. Initially characterized for its ability to contact the catalytic subunit of DNA polymerase III (Pol III), a complex, multichain enzyme responsible for most of the replicative synthesis in bacteria; Pol III exhibits 3'-5' exonuclease proofreading activity. The beta chain is required for initiation of replication as well as for processivity of DNA replication. The sequence is that of Beta sliding clamp (dnaN) from Escherichia coli O157:H7.